A 560-amino-acid chain; its full sequence is MSASSITGDFQDFLKHGLPAIAPAPGSETPHSPKLEEKHREKRAGLPDRHRRPIPARSRLVMLPKVETEASGLVRSHGEQGQMPENMQVSQFKMVNYSYDEDLEELCPVCGDKVSGYHYGLLTCESCKGFFKRTVQNQKRYTCIENQNCQIDKTQRKRCPYCRFKKCIDVGMKLEAVRADRMRGGRNKFGPMYKRDRALKQQKKALIRANGLKLEAMSQVIQAMPSDLTSAIQNIHSASKGLPLSHVALPPTDYDRSPFVTSPISMTMPPHGSLHGYQPYGHFPNRAIKSEYPDPYSSSPESMMGYSYMDGYQTSSPASIPHLILELLKCEPDEPQVQAKIMAYLQQEQNNRNRQEKLSAFGLLCKMADQTLFSIVEWARSSIFFRELKVDDQMKLLQNCWSELLILDHIYRQVAHGKEGTIFLVTGEHVDYSSIISNTEVAFNNLLSLAQELVVRLRSLQFDQREFVCLKFLVLFSSDVKNLENFQLVEGVQEQVNAALLDYTLCNYPQQTEKFGQLLLRLPEIRAISKQAEDYLYYKHVNGDVPYNNLLIEMLHAKRA.

Residues 17 to 54 are disordered; that stretch reads GLPAIAPAPGSETPHSPKLEEKHREKRAGLPDRHRRPI. Positions 31 to 48 are enriched in basic and acidic residues; that stretch reads HSPKLEEKHREKRAGLPD. A DNA-binding region (nuclear receptor) is located at residues 104-179; that stretch reads EELCPVCGDK…VGMKLEAVRA (76 aa). 8 residues coordinate Zn(2+): Cys-107, Cys-110, Cys-124, Cys-127, Cys-143, Cys-149, Cys-159, and Cys-162. 2 consecutive NR C4-type zinc fingers follow at residues 107–127 and 143–162; these read CPVC…CESC and CIEN…CPYC. The tract at residues 173–188 is C-terminal extension (CTE); that stretch reads KLEAVRADRMRGGRNK. The FTZ-F1 box motif lies at 189-208; sequence FGPMYKRDRALKQQKKALIR. Lys-289 participates in a covalent cross-link: Glycyl lysine isopeptide (Lys-Gly) (interchain with G-Cter in SUMO1). The region spanning 319 to 558 is the NR LBD domain; the sequence is SIPHLILELL…NLLIEMLHAK (240 aa). Residues Tyr-535 and Lys-539 each contribute to the a phospholipid derivative site. Residues 547–558 form an AF-2 region; that stretch reads YNNLLIEMLHAK.

This sequence belongs to the nuclear hormone receptor family. NR5 subfamily. As to quaternary structure, monomer; Binds DNA as a monomer. Interacts with nuclear receptor corepressors NR0B1 and NR0B2; repressing NR5A2 nuclear receptor activity. Interacts with nuclear receptor coactivators CTNNB1, PPARGC1A and NCOA2; interaction takes place following ligand-binding and promotes target gene activation. Interacts (when sumoylated) with GPS2; interaction with GPS2 onto hepatic acute phase protein promoters prevents N-Cor corepressor complex dissociation. Interacts with HNF1A. Interacts with GRIP1. In terms of processing, sumoylated by SUMO1 at Lys-289 during the hepatic acute phase response, leading to promote interaction with GPS2 and prevent N-Cor corepressor complex dissociation.

It is found in the nucleus. The protein localises to the chromosome. Its function is as follows. Orphan nuclear receptor that binds DNA as a monomer to the 5'-TCAAGGCCA-3' sequence and controls expression of target genes: regulates key biological processes, such as early embryonic development, cholesterol and bile acid synthesis pathways, as well as liver and pancreas morphogenesis. Ligand-binding causes conformational change which causes recruitment of coactivators, promoting target gene activation. The specific ligand is unknown, but specific phospholipids, such as phosphatidylethanolamine, phosphatidylserine, dilauroyl phosphatidylcholine and diundecanoyl phosphatidylcholine can act as ligand in vitro. Acts as a pioneer transcription factor, which unwraps target DNA from histones and elicits local opening of closed chromatin. Plays a central role during preimplantation stages of embryonic development. Plays a minor role in zygotic genome activation (ZGA) by regulating a small set of two-cell stage genes. Plays a major role in morula development (2-16 cells embryos) by acting as a master regulator at the 8-cell stage, controlling expression of lineage-specifying transcription factors and genes involved in mitosis, telomere maintenance and DNA repair. Zygotic NR5A2 binds to both closed and open chromatin with other transcription factors, often at SINE B1/Alu repeats DNA elements, promoting chromatin accessibility at nearby regulatory regions. Also involved in the epiblast stage of development and embryonic stem cell pluripotency, by promoting expression of POU5F1/OCT4. Regulates other processes later in development, such as formation of connective tissue in lower jaw and middle ear, neural stem cell differentiation, ovarian follicle development and Sertoli cell differentiation. Involved in exocrine pancreas development and acinar cell differentiation. Acts as an essential transcriptional regulator of lipid metabolism. Key regulator of cholesterol 7-alpha-hydroxylase gene (CYP7A) expression in liver. Also acts as a negative regulator of inflammation in different organs, such as, liver and pancreas. Protects against intestinal inflammation via its ability to regulate glucocorticoid production. Plays an anti-inflammatory role during the hepatic acute phase response by acting as a corepressor: inhibits the hepatic acute phase response by preventing dissociation of the N-Cor corepressor complex. Acts as a regulator of immunity by promoting lymphocyte T-cell development, proliferation and effector functions. Also involved in resolution of endoplasmic reticulum stress in the liver. The chain is Nuclear receptor subfamily 5 group A member 2 from Rattus norvegicus (Rat).